The following is a 499-amino-acid chain: MIVEMSQISKSFSGNQVLKNVSFTLEKGEIHALMGENGAGKSTLMKILTGIYPRDEGVVRVKGKEVAYTHPKDAEKDGIAVIHQELNILPELSVAENLFLGNEYTVGKTGWLKTKKMNEYAEQQLAELGLKVKASDRAGALSVGKQQLIEIAKALMTNADIIIMDEPTAALTDREIDTLFTVIRGLQEKGVTFVYISHRMEEIFSLCQRITVLRDGNYVSTKVIAETSFDEIVKLMVGRELGGRYPDHDLEPGAVKLAVKNVSRKNEFESVTFEVREGEIFGIAGLMGAGRSEVVESIFGYRHLHSGTIEIDQKPVVFKRPVDAIENGIAFVPEDRKTKGLIVNFSVRDNLSITNLATVSSGNMMSSTKEQALYQELVKKLGVRTSGPHQKAKSLSGGNQQKVVIAKWLGMKPKVLILDEPTRGVDVGAKKEIYTIMNELAKQGVAIIMVSSELPEIIGMSTRVAVMFEGKLMKVLDRNELSEETIMHYATGGDKHVHQ.

2 ABC transporter domains span residues 3–240 and 250–494; these read VEMS…VGRE and LEPG…TGGD. 35–42 is a binding site for ATP; it reads GENGAGKS.

The protein belongs to the ABC transporter superfamily. Ribose importer (TC 3.A.1.2.1) family. The complex is composed of an ATP-binding protein (RbsA), two transmembrane proteins (RbsC) and a solute-binding protein (RbsB).

The protein localises to the cell membrane. It catalyses the reaction D-ribose(out) + ATP + H2O = D-ribose(in) + ADP + phosphate + H(+). Functionally, part of the ABC transporter complex RbsABC involved in ribose import. Responsible for energy coupling to the transport system. This chain is Ribose import ATP-binding protein RbsA, found in Shouchella clausii (strain KSM-K16) (Alkalihalobacillus clausii).